The primary structure comprises 93 residues: YcgL domain-containing protein VFMJ11_1829 (93 aa).

A YcgL domain is found at 1 to 84; the sequence is MFCSIYKSTK…PPENLLEKYK (84 aa).

This Aliivibrio fischeri (strain MJ11) (Vibrio fischeri) protein is YcgL domain-containing protein VFMJ11_1829.